The sequence spans 81 residues: uncharacterized protein (81 aa).

This is an uncharacterized protein from Vaccinia virus (strain Copenhagen) (VACV).